The primary structure comprises 560 residues: Synaptotagmin-5 (560 aa).

The chain crosses the membrane as a helical span at residues 2-22 (GFIVGVVIGLLVGIAIIIGFV). In terms of domain architecture, SMP-LTD spans 67-249 (ERQKLTWLNH…WPVRKVIPII (183 aa)). Positions 227–523 (EETIRDAVED…YIGRCILTLT (297 aa)) are phospholipid binding. C2 domains follow at residues 243-364 (RKVI…DVWL) and 417-535 (TTDE…KDWY). The Ca(2+) site is built by Asp278, Asp284, Asp334, Glu336, Asp451, Asp457, Asp506, Asp508, and Asp513.

It belongs to the synaptotagmin family. Ca(2+) serves as cofactor.

It is found in the membrane. Its function is as follows. May be involved in membrane trafficking. In Arabidopsis thaliana (Mouse-ear cress), this protein is Synaptotagmin-5 (SYT5).